Reading from the N-terminus, the 928-residue chain is Outer membrane protein SlpA (928 aa).

The first 23 residues, 1–23 (MKKRLVTLLAGLLTVLSMGFGLA), serve as a signal peptide directing secretion. Residues 24–84 (QFSDVPAGHW…QQIEEELKTQ (61 aa)) enclose the SLH domain.

Homotrimer.

Its subcellular location is the cell outer membrane. Plays an important role in the structural organization and integrity of the cell envelope, bridging the outer membrane to the peptidoglyan layer. Appears to be a nonselective channel. The sequence is that of Outer membrane protein SlpA (slpA) from Thermus thermophilus (strain ATCC 27634 / DSM 579 / HB8).